The following is a 136-amino-acid chain: Protein NrdI (136 aa).

It belongs to the NrdI family.

Functionally, probably involved in ribonucleotide reductase function. This Salmonella arizonae (strain ATCC BAA-731 / CDC346-86 / RSK2980) protein is Protein NrdI.